A 214-amino-acid polypeptide reads, in one-letter code: Membrane-spanning 4-domains subfamily A member 3 (214 aa).

Positions 1–31 are disordered; it reads MASHEVDNAELGSASAHGTPGSEAGPEELNT. At 1-49 the chain is on the cytoplasmic side; that stretch reads MASHEVDNAELGSASAHGTPGSEAGPEELNTSVYQPIDGSPDYQKAKLQ. The chain crosses the membrane as a helical span at residues 50–70; it reads VLGAIQILNAAMILALGVFLG. Residues 71–81 are Extracellular-facing; sequence SLQYPYHFQKH. The helical transmembrane segment at 82-102 threads the bilayer; it reads FFFFTFYTGYPIWGAVFFCSS. The Cytoplasmic segment spans residues 103-124; the sequence is GTLSVVAGIKPTRTWIQNSFGM. Residues 125 to 145 form a helical membrane-spanning segment; it reads NIASATIALVGTAFLSLNIAV. Topologically, residues 146–175 are extracellular; it reads NIQSLRSCHSSSESPDLCNYMGSISNGMVS. A helical membrane pass occupies residues 176 to 196; it reads LLLILTLLELCVTISTIAMWC. The Cytoplasmic segment spans residues 197–214; that stretch reads NANCCNSREEISSPPNSV.

The protein belongs to the MS4A family. Interacts with CDKN3. Interacts with CDKN3-CDK2 complexes through its binding to CDKN3; this interaction facilitates dissociation of cyclin A from CDKN3-CDK2 complexes. Expressed specifically in hematopoietic cells and tissues.

It localises to the endomembrane system. Its subcellular location is the cytoplasm. It is found in the perinuclear region. Its function is as follows. Hematopoietic modulator for the G1-S cell cycle transition. Modulates the level of phosphorylation of cyclin-dependent kinase 2 (CDK2) through its direct binding to cyclin-dependent kinase inhibitor 3 (CDKN3/KAP). The sequence is that of Membrane-spanning 4-domains subfamily A member 3 (MS4A3) from Homo sapiens (Human).